The sequence spans 114 residues: Replication initiation control protein YabA (114 aa).

4 residues coordinate Zn(2+): His79, Cys81, Cys95, and Cys98.

It belongs to the YabA family. As to quaternary structure, homotetramer. Interacts with both DnaA and DnaN, acting as a bridge between these two proteins. Zn(2+) is required as a cofactor.

The protein localises to the cytoplasm. It is found in the nucleoid. Functionally, involved in control of chromosome replication initiation. Inhibits the cooperative binding of DnaA to the oriC region, thus negatively regulating initiation of chromosome replication. Inhibits the ability of DnaA-ATP to form a helix on DNA; does not disassemble preformed DnaA-DNA helices. Decreases the residence time of DnaA on the chromosome at its binding sites (oriC, replication forks and promoter-binding sites). Tethers DnaA to the replication machinery via the DNA polymerase beta sliding clamp subunit (dnaN). Associates with oriC and other DnaA targets on the chromosome in a DnaA-dependent manner. The sequence is that of Replication initiation control protein YabA from Lactobacillus gasseri (strain ATCC 33323 / DSM 20243 / BCRC 14619 / CIP 102991 / JCM 1131 / KCTC 3163 / NCIMB 11718 / NCTC 13722 / AM63).